Here is a 311-residue protein sequence, read N- to C-terminus: Aspartate carbamoyltransferase catalytic subunit (311 aa).

Carbamoyl phosphate contacts are provided by Arg55 and Thr56. L-aspartate is bound at residue Lys85. Carbamoyl phosphate contacts are provided by Arg106, His135, and Gln138. Residues Arg168 and Arg230 each contribute to the L-aspartate site. Carbamoyl phosphate is bound by residues Leu268 and Pro269.

The protein belongs to the aspartate/ornithine carbamoyltransferase superfamily. ATCase family. In terms of assembly, heterododecamer (2C3:3R2) of six catalytic PyrB chains organized as two trimers (C3), and six regulatory PyrI chains organized as three dimers (R2).

The catalysed reaction is carbamoyl phosphate + L-aspartate = N-carbamoyl-L-aspartate + phosphate + H(+). It participates in pyrimidine metabolism; UMP biosynthesis via de novo pathway; (S)-dihydroorotate from bicarbonate: step 2/3. In terms of biological role, catalyzes the condensation of carbamoyl phosphate and aspartate to form carbamoyl aspartate and inorganic phosphate, the committed step in the de novo pyrimidine nucleotide biosynthesis pathway. This is Aspartate carbamoyltransferase catalytic subunit from Escherichia fergusonii (strain ATCC 35469 / DSM 13698 / CCUG 18766 / IAM 14443 / JCM 21226 / LMG 7866 / NBRC 102419 / NCTC 12128 / CDC 0568-73).